Reading from the N-terminus, the 333-residue chain is Ribosomal protein L11 methyltransferase (333 aa).

Thr-181, Gly-202, Asp-224, and Asn-268 together coordinate S-adenosyl-L-methionine.

Belongs to the methyltransferase superfamily. PrmA family.

The protein resides in the cytoplasm. The enzyme catalyses L-lysyl-[protein] + 3 S-adenosyl-L-methionine = N(6),N(6),N(6)-trimethyl-L-lysyl-[protein] + 3 S-adenosyl-L-homocysteine + 3 H(+). Methylates ribosomal protein L11. The chain is Ribosomal protein L11 methyltransferase from Helicobacter pylori (strain ATCC 700392 / 26695) (Campylobacter pylori).